The following is a 483-amino-acid chain: Cysteine proteinase 1, mitochondrial (483 aa).

Residues 1–30 constitute a mitochondrion transit peptide; that stretch reads MLPTSVSRSLYLKTFRSHLLRAPQIVLKRM. Residues C102, H398, and N421 contribute to the active site. Residue K483 is a propeptide, removed in mature form; by autocatalysis.

The protein belongs to the peptidase C1 family. In terms of assembly, homohexamer. Binds to nucleic acids. Binds single-stranded DNA and RNA with higher affinity than double-stranded DNA. In terms of processing, the N-terminus of isoform Cytoplasmic is blocked.

The protein localises to the mitochondrion. It localises to the cytoplasm. It catalyses the reaction Inactivates bleomycin B2 (a cytotoxic glycometallopeptide) by hydrolysis of a carboxyamide bond of beta-aminoalanine, but also shows general aminopeptidase activity. The specificity varies somewhat with source, but amino acid arylamides of Met, Leu and Ala are preferred.. Inhibited by E64, a specific inhibitor of cysteine proteases, N-ethylmaleimide, iodacetamide, and mercury and zinc ions. Functionally, the normal physiological role of the enzyme is unknown, but it is not essential for the viability of yeast cells. Has aminopeptidase activity, shortening substrate peptides sequentially by 1 amino acid. Has bleomycin hydrolase activity, which can protect the cell from the toxic effects of bleomycin. Has homocysteine-thiolactonase activity, protecting the cell against homocysteine toxicity. Acts as a repressor in the GAL4 regulatory system, but this does not require either the peptidase or nucleic acid-binding activities. This is Cysteine proteinase 1, mitochondrial (LAP3) from Saccharomyces cerevisiae (strain AWRI1631) (Baker's yeast).